We begin with the raw amino-acid sequence, 167 residues long: CGG triplet repeat-binding protein 1 (167 aa).

The residue at position 56 (S56) is a Phosphoserine. The segment at 65-86 is disordered; sequence KTHTKRKAEFEEQNVRKKQRPL. A Nuclear localization signal motif is present at residues 80–84; sequence RKKQR. The residue at position 164 (S164) is a Phosphoserine.

Its subcellular location is the nucleus. Functionally, binds to nonmethylated 5'-d(CGG)(n)-3' trinucleotide repeats in the FMR1 promoter. May play a role in regulating FMR1 promoter. The sequence is that of CGG triplet repeat-binding protein 1 (Cggbp1) from Mus musculus (Mouse).